We begin with the raw amino-acid sequence, 597 residues long: MTTQTPNGFTLDNAGKRIVVDPVTRIEGHMRCEVNVNDQGIITNAVSTGTMWRGLEVILKGRDPRDAWAFTERICGVCTGTHALTSVRAVESALGITIPDNANSIRNMMQLNLQIHDHIVHFYHLHALDWVNPVNALRADPKATSELQQMVSPSHPLSSPGYFRDVQNRLKKFVESGQLGLFKNGYWDNPAYKLPPEADLMATTHYLEALDLQKEVVKVHTIFGGKNPHPNWLVGGVPCPINVDGVGAVGAINMERLNLVSSIIDRCTEFTRNVYLPDLKAIGGFYKEWLYGGGLSGQSVLSYGDIPENPNDFSAGQLHLPRGAIINGNLNEVHDVDTTDPEQVQEFVDHSWYDYGEPGMGLHPWDGRTEPKFELGPNLKGTRTNIENIDEGAKYSWIKAPRWRGNAMEVGPLAATSSVTRKGHEDIKNQVEGLLRDMNLPVSALFSTLGRTAARALEAEYCCRLQKHFFDKLVTNIKNGDSSTANVEKWDPSTWPKEAKGVGMTEAPRGALGHWVKIKDGRIENYQCVVPTTWNGSPRDSKGNIGAFEASLLNTKMERPEEPVEILRTLHSFDPCLACSTHVMSAEGAPLTTVKVR.

Ni(2+) is bound by residues Cys75, Cys78, Cys576, and Cys579.

It belongs to the [NiFe]/[NiFeSe] hydrogenase large subunit family. In terms of assembly, heterodimer of a large and a small subunit. Ni(2+) serves as cofactor.

It is found in the cell membrane. It catalyses the reaction H2 + A = AH2. This enzyme recycles the H(2) produced by nitrogenase to increase the production of ATP and to protect nitrogenase against inhibition or damage by O(2) under carbon- or phosphate-limited conditions. This chain is Uptake hydrogenase large subunit (hupB), found in Rhodobacter capsulatus (Rhodopseudomonas capsulata).